The sequence spans 222 residues: Methylthioribulose-1-phosphate dehydratase (222 aa).

Zn(2+) contacts are provided by His-94 and His-96.

The protein belongs to the aldolase class II family. MtnB subfamily. The cofactor is Zn(2+).

It catalyses the reaction 5-(methylsulfanyl)-D-ribulose 1-phosphate = 5-methylsulfanyl-2,3-dioxopentyl phosphate + H2O. Its pathway is amino-acid biosynthesis; L-methionine biosynthesis via salvage pathway; L-methionine from S-methyl-5-thio-alpha-D-ribose 1-phosphate: step 2/6. In terms of biological role, catalyzes the dehydration of methylthioribulose-1-phosphate (MTRu-1-P) into 2,3-diketo-5-methylthiopentyl-1-phosphate (DK-MTP-1-P). The protein is Methylthioribulose-1-phosphate dehydratase of Yersinia pseudotuberculosis serotype IB (strain PB1/+).